The following is a 401-amino-acid chain: Elongation factor Tu (401 aa).

The region spanning 10–211 (KPHLNVGTIG…ALDTFVPNPK (202 aa)) is the tr-type G domain. Residues 19 to 26 (GHVDHGKT) are G1. 19 to 26 (GHVDHGKT) contributes to the GTP binding site. Thr26 contacts Mg(2+). The tract at residues 62-66 (GITIA) is G2. A G3 region spans residues 83–86 (DCPG). Residues 83–87 (DCPGH) and 138–141 (NKAD) each bind GTP. Residues 138-141 (NKAD) are G4. A G5 region spans residues 179–181 (SAV).

It belongs to the TRAFAC class translation factor GTPase superfamily. Classic translation factor GTPase family. EF-Tu/EF-1A subfamily. As to quaternary structure, monomer.

The protein localises to the cytoplasm. It carries out the reaction GTP + H2O = GDP + phosphate + H(+). In terms of biological role, GTP hydrolase that promotes the GTP-dependent binding of aminoacyl-tRNA to the A-site of ribosomes during protein biosynthesis. The protein is Elongation factor Tu of Leptospira interrogans serogroup Icterohaemorrhagiae serovar copenhageni (strain Fiocruz L1-130).